Consider the following 124-residue polypeptide: Small ribosomal subunit protein uS12 (124 aa).

3-methylthioaspartic acid is present on Asp-89.

This sequence belongs to the universal ribosomal protein uS12 family. Part of the 30S ribosomal subunit. Contacts proteins S8 and S17. May interact with IF1 in the 30S initiation complex.

In terms of biological role, with S4 and S5 plays an important role in translational accuracy. Its function is as follows. Interacts with and stabilizes bases of the 16S rRNA that are involved in tRNA selection in the A site and with the mRNA backbone. Located at the interface of the 30S and 50S subunits, it traverses the body of the 30S subunit contacting proteins on the other side and probably holding the rRNA structure together. The combined cluster of proteins S8, S12 and S17 appears to hold together the shoulder and platform of the 30S subunit. This Psychrobacter arcticus (strain DSM 17307 / VKM B-2377 / 273-4) protein is Small ribosomal subunit protein uS12.